Consider the following 289-residue polypeptide: GTPase Era (289 aa).

Residues 2–167 (KSGFISLIGR…LDEIYKYLPE (166 aa)) form the Era-type G domain. The interval 10–17 (GRTNAGKS) is G1. 10 to 17 (GRTNAGKS) lines the GTP pocket. A G2 region spans residues 36-40 (NATRR). The G3 stretch occupies residues 57-60 (DTPG). GTP contacts are provided by residues 57–61 (DTPGL) and 116–119 (TKID). Residues 116-119 (TKID) are G4. The tract at residues 146-148 (LSV) is G5. The region spanning 198 to 274 (VSDEVPYSTD…FLKINVKIDK (77 aa)) is the KH type-2 domain.

This sequence belongs to the TRAFAC class TrmE-Era-EngA-EngB-Septin-like GTPase superfamily. Era GTPase family. Monomer.

Its subcellular location is the cytoplasm. The protein localises to the cell inner membrane. Its function is as follows. An essential GTPase that binds both GDP and GTP, with rapid nucleotide exchange. Plays a role in 16S rRNA processing and 30S ribosomal subunit biogenesis and possibly also in cell cycle regulation and energy metabolism. The polypeptide is GTPase Era (Campylobacter fetus subsp. fetus (strain 82-40)).